The chain runs to 204 residues: Acyl-homoserine-lactone synthase (204 aa).

This sequence belongs to the autoinducer synthase family.

It catalyses the reaction a fatty acyl-[ACP] + S-adenosyl-L-methionine = an N-acyl-L-homoserine lactone + S-methyl-5'-thioadenosine + holo-[ACP] + H(+). In terms of biological role, required for the synthesis of acyl-HSL autoinducers that bind to SolR. This chain is Acyl-homoserine-lactone synthase (solI), found in Ralstonia solanacearum (Pseudomonas solanacearum).